A 62-amino-acid polypeptide reads, in one-letter code: Large ribosomal subunit protein bL32 (62 aa).

This sequence belongs to the bacterial ribosomal protein bL32 family.

The protein is Large ribosomal subunit protein bL32 of Levilactobacillus brevis (strain ATCC 367 / BCRC 12310 / CIP 105137 / JCM 1170 / LMG 11437 / NCIMB 947 / NCTC 947) (Lactobacillus brevis).